The sequence spans 245 residues: Thiopurine S-methyltransferase (245 aa).

Position 14 is a phosphoserine (serine 14). 29-40 (WREKWVDGKIGF) contributes to the S-adenosyl-L-methionine binding site. Phenylalanine 40 lines the substrate pocket. An N6-acetyllysine modification is found at lysine 58. The S-adenosyl-L-methionine site is built by leucine 69, glutamate 90, and arginine 152.

This sequence belongs to the class I-like SAM-binding methyltransferase superfamily. TPMT family. As to quaternary structure, monomer.

The protein resides in the cytoplasm. The enzyme catalyses S-adenosyl-L-methionine + a thiopurine = S-adenosyl-L-homocysteine + a thiopurine S-methylether.. This chain is Thiopurine S-methyltransferase (TPMT), found in Panthera tigris (Tiger).